Reading from the N-terminus, the 716-residue chain is Protein C-mannosyl-transferase DPY19L3 (716 aa).

Over 1 to 43 the chain is Cytoplasmic; that stretch reads MMYIRQRKETKPIEVSEDFPSPKEDVKLEKKLPSGCASGRFWK. Residues 44 to 64 traverse the membrane as a helical segment; sequence ILSSAVGGTVALCIGLLTSVY. The Lumenal segment spans residues 65-154; it reads LATLHENDLW…RVLPIQKYLE (90 aa). Asn118 carries an N-linked (GlcNAc...) asparagine glycan. A helical membrane pass occupies residues 155 to 182; sequence PVYFYIYTLFGLQAVYVTALYITSWLLS. The Cytoplasmic segment spans residues 183 to 184; the sequence is GT. The segment at residues 185–197 is an intramembrane region (name=3); that stretch reads WLSGLLAALWYVT. Over 198–215 the chain is Cytoplasmic; the sequence is NRIDTTRVEFTIPLRENW. The segment at residues 216-230 is an intramembrane region (name=4); it reads ALPFFAIQIAAITYF. Residues 231-239 lie on the Cytoplasmic side of the membrane; sequence LRPNLQPLS. Residues 240–256 traverse the membrane as a helical segment; it reads ERLTLLAIFVSTFLFSL. Residues 257–262 lie on the Lumenal side of the membrane; the sequence is TWQFNQ. Residues 263–279 form a helical membrane-spanning segment; sequence FMMLLQALVLFILDSLD. At 280-289 the chain is on the cytoplasmic side; that stretch reads MLPAMKATWL. A helical membrane pass occupies residues 290 to 306; that stretch reads YGIQISCLLLVCTLQFF. The Lumenal portion of the chain corresponds to 307–308; it reads NS. The helical transmembrane segment at 309-323 threads the bilayer; sequence MILGSLLISFNLSVL. At 324–338 the chain is on the cytoplasmic side; the sequence is IVRKLQKNLKTGSFL. Residues 339-359 form a helical membrane-spanning segment; that stretch reads TRIWKLLLHLLLVFCLTLFLN. Over 360–414 the chain is Lumenal; that stretch reads NIIKKVLNLKSDEHIFKFLKAKFGFGATRDFDANLYLCEEAFGLLPLNTFQRLSE. A helical transmembrane segment spans residues 415 to 437; sequence TLLFYAYMFVLVVTVVTASVVAF. The Cytoplasmic portion of the chain corresponds to 438–465; that stretch reads HNLSDSTSLKSMDQTRKRAVDLKPEAAY. A helical transmembrane segment spans residues 466–485; that stretch reads NLIHTILFGVLALSTMRMKY. Topologically, residues 486 to 487 are lumenal; that stretch reads LW. The helical transmembrane segment at 488–499 threads the bilayer; the sequence is TSHMCVFASFGL. The Cytoplasmic segment spans residues 500 to 522; it reads CSSEVWELLLRLVHLCNPKRIWV. A helical transmembrane segment spans residues 523–539; it reads LRYLVPVLTLLYLCYKS. Over 540 to 716 the chain is Lumenal; sequence WPGVMDELSE…FHVYKLSRNK (177 aa). Asn704 is a glycosylation site (N-linked (GlcNAc...) asparagine).

Belongs to the dpy-19 family.

The protein resides in the endoplasmic reticulum membrane. It catalyses the reaction L-tryptophyl-[protein] + a di-trans,poly-cis-dolichyl beta-D-mannosyl phosphate = C-alpha-D-mannosyl-L-tryptophyl-[protein] + a di-trans,poly-cis-dolichyl phosphate + H(+). It functions in the pathway protein modification; protein glycosylation. Its function is as follows. C-mannosyltransferase that mediates C-mannosylation of tryptophan residues on target proteins. The reaction occurs on the luminal side of the endoplasmic reticulum and involves the transfer of a mannose unit from a dolichylphosphate mannose (Dol-P-Man) donor to an acceptor protein containing a WxxW or WxxC consensus sequence. C-mannosylates RSPO1, a Wnt signaling regulator, preferentially at the first Trp residue in the sequence WxxW. C-mannosylates the netrin receptor UNC5A, preferentially at the third tryptophan of WxxWxxWxxC sequence. This chain is Protein C-mannosyl-transferase DPY19L3 (Dpy19l3), found in Mus musculus (Mouse).